Reading from the N-terminus, the 118-residue chain is Aspartate 1-decarboxylase 1 (118 aa).

Ser25 (schiff-base intermediate with substrate; via pyruvic acid) is an active-site residue. Pyruvic acid (Ser) is present on Ser25. Thr57 contributes to the substrate binding site. Tyr58 (proton donor) is an active-site residue. Position 73–75 (Gly73–Ala75) interacts with substrate.

It belongs to the PanD family. Heterooctamer of four alpha and four beta subunits. It depends on pyruvate as a cofactor. In terms of processing, is synthesized initially as an inactive proenzyme, which is activated by self-cleavage at a specific serine bond to produce a beta-subunit with a hydroxyl group at its C-terminus and an alpha-subunit with a pyruvoyl group at its N-terminus.

It localises to the cytoplasm. The enzyme catalyses L-aspartate + H(+) = beta-alanine + CO2. It participates in cofactor biosynthesis; (R)-pantothenate biosynthesis; beta-alanine from L-aspartate: step 1/1. Its function is as follows. Catalyzes the pyruvoyl-dependent decarboxylation of aspartate to produce beta-alanine. The chain is Aspartate 1-decarboxylase 1 from Gloeobacter violaceus (strain ATCC 29082 / PCC 7421).